Consider the following 1847-residue polypeptide: Replication factor C small subunit (1847 aa).

3 consecutive DOD-type homing endonuclease domains span residues 179–311, 780–927, and 1348–1508; these read WLGY…RFGI, MLGL…ISGI, and LLGF…EFEV.

This sequence belongs to the activator 1 small subunits family. RfcS subfamily. Heteromultimer composed of small subunits (RfcS) and large subunits (RfcL). Post-translationally, this protein undergoes a protein self splicing that involves a post-translational excision of the intervening region (intein) followed by peptide ligation.

Part of the RFC clamp loader complex which loads the PCNA sliding clamp onto DNA. In Methanocaldococcus jannaschii (strain ATCC 43067 / DSM 2661 / JAL-1 / JCM 10045 / NBRC 100440) (Methanococcus jannaschii), this protein is Replication factor C small subunit (rfcS).